Reading from the N-terminus, the 168-residue chain is MAEPWGNELASAAARGDLEQLTSLLQNNVNVNAQNGFGRTALQVMKLGNPEIARRLLLRGANPNLKDGTGFAVIHDAARAGFLDTVQALLEFQADVNIEDNEGNLPLHLAAKEGHLPVVEFLMKHTACNVGHRNHKGDTAFDLARFYGRNEVISLMEANGVGGATSLQ.

ANK repeat units lie at residues 4-33 (PWGN…NVNA), 37-65 (FGRT…NPNL), 69-98 (TGFA…DVNI), 102-132 (EGNL…NVGH), and 136-165 (KGDT…GGAT).

It belongs to the CDKN2 cyclin-dependent kinase inhibitor family. Heterodimer of p18 with CDK6.

In terms of biological role, interacts strongly with CDK6, weakly with CDK4. Inhibits cell growth and proliferation with a correlated dependence on endogenous retinoblastoma protein RB. This is Cyclin-dependent kinase 4 inhibitor C (Cdkn2c) from Mus musculus (Mouse).